A 127-amino-acid polypeptide reads, in one-letter code: uncharacterized protein (127 aa).

This is an uncharacterized protein from Haemophilus influenzae (strain ATCC 51907 / DSM 11121 / KW20 / Rd).